The sequence spans 88 residues: Putative septation protein SpoVG (88 aa).

This sequence belongs to the SpoVG family.

Could be involved in septation. The sequence is that of Putative septation protein SpoVG from Caldicellulosiruptor bescii (strain ATCC BAA-1888 / DSM 6725 / KCTC 15123 / Z-1320) (Anaerocellum thermophilum).